Consider the following 341-residue polypeptide: Serpentine receptor class alpha-28 (341 aa).

The next 7 membrane-spanning stretches (helical) occupy residues 25–45, 57–77, 107–129, 142–162, 188–208, 242–262, and 275–295; these read FIIS…RVLL, LLFS…VIRL, YYYT…LFSF, ASIV…YWVF, VNNI…FLYI, IVIF…SVFI, and LIIS…LIIL.

Belongs to the nematode receptor-like protein sra family.

It localises to the membrane. The polypeptide is Serpentine receptor class alpha-28 (sra-28) (Caenorhabditis elegans).